The chain runs to 131 residues: Arsenate reductase (131 aa).

Residues Cys-10, Cys-82, and Cys-89 each act as nucleophile in the active site. 2 disulfides stabilise this stretch: Cys-10/Cys-82 and Cys-82/Cys-89.

The protein belongs to the low molecular weight phosphotyrosine protein phosphatase family. Thioredoxin-coupled ArsC subfamily.

Its subcellular location is the cytoplasm. It catalyses the reaction arsenate + [thioredoxin]-dithiol + H(+) = arsenite + [thioredoxin]-disulfide + H2O. Catalyzes the reduction of arsenate [As(V)] to arsenite [As(III)]. The chain is Arsenate reductase from Staphylococcus aureus (strain bovine RF122 / ET3-1).